The primary structure comprises 730 residues: Cyclin-T2 (730 aa).

The tract at residues 1–300 (MASGRGASSR…SVTGVPTNPS (300 aa)) is interaction with MDFIC and MDFI. The Cyclin N-terminal domain maps to 12 to 147 (FFTREQLENT…IMLQTLGFEI (136 aa)). Positions 250-300 (RLKKIRNWRANQAARKPKVDGQVSETPLLGSSLVQNSILVDSVTGVPTNPS) are interaction with POLR2A. 2 stretches are compositionally biased toward polar residues: residues 341–350 (TSYGLSSHQE) and 360–389 (TEQL…SISL). Residues 341–430 (TSYGLSSHQE…GPISTTPGII (90 aa)) form a disordered region. Positions 398-412 (DKISDHSSVKQEYTH) are enriched in basic and acidic residues. A Glycyl lysine isopeptide (Lys-Gly) (interchain with G-Cter in SUMO2) cross-link involves residue Lys407. The residue at position 480 (Ser480) is a Phosphoserine. Residues 497–652 (DKKEKSGSLK…SSSSSSSSVK (156 aa)) form a disordered region. 2 stretches are compositionally biased toward basic and acidic residues: residues 517-543 (SASK…EGSG) and 552-565 (ISRD…EHPS). Positions 566–578 (SRHHTSSHKHSHS) are enriched in basic residues. Positions 579–588 (HSGSSSGGSK) are enriched in low complexity. Ser601 bears the Phosphoserine mark. 2 stretches are compositionally biased toward low complexity: residues 606–616 (SSDGISSSSSS) and 637–652 (SSKS…SSVK).

It belongs to the cyclin family. Cyclin C subfamily. In terms of assembly, interacts with CDK9 to form P-TEFb. Interacts with POLR2A (via the C-terminal domain (CTD)); mediates transcriptional activity. Interacts with HEXIM1; mediates formation of a tripartite complex with KPNA2. Interacts with HEXIM2. Interacts with PKN1; enhances MYOD1-dependent transcription. P-TEFB complex interacts with RB1; promotes phosphorylation of RB1. P-TEFB complex interacts with MYOD1; promotes the transcriptional activity of MYOD1 through its CDK9-mediated phosphorylation. Interacts with MDFI and MDFIC. Interacts with MON1B; down-regulates CCNT2-mediated activation of viral promoters during herpes simplex virus 1/HHV-1 infection. As to quaternary structure, (Microbial infection) Interacts with HIV-2 and SIV Tat. Does not bind efficiently to the transactivation domain of the HIV-1 Tat. As to expression, ubiquitously expressed.

Its subcellular location is the cytoplasm. The protein resides in the perinuclear region. The protein localises to the nucleus. Regulatory subunit of the cyclin-dependent kinase pair (CDK9/cyclin T) complex, also called positive transcription elongation factor B (P-TEFB), which is proposed to facilitate the transition from abortive to production elongation by phosphorylating the CTD (carboxy-terminal domain) of the large subunit of RNA polymerase II (RNAP II). The activity of this complex is regulated by binding with 7SK snRNA. Plays a role during muscle differentiation; P-TEFB complex interacts with MYOD1; this tripartite complex promotes the transcriptional activity of MYOD1 through its CDK9-mediated phosphorylation and binds the chromatin of promoters and enhancers of muscle-specific genes; this event correlates with hyperphosphorylation of the CTD domain of RNA pol II. In addition, enhances MYOD1-dependent transcription through interaction with PKN1. Involved in early embryo development. In terms of biological role, (Microbial infection) Promotes transcriptional activation of early and late herpes simplex virus 1/HHV-1 promoters. The chain is Cyclin-T2 from Homo sapiens (Human).